A 360-amino-acid chain; its full sequence is Glutaminyl-peptide cyclotransferase (360 aa).

The signal sequence occupies residues 1–23; sequence MKYLKILIIVTIFFFLLINVINC. N-linked (GlcNAc...) asparagine glycosylation is present at N135. D165 contacts Zn(2+). E199 acts as the Proton acceptor in catalysis. A Zn(2+)-binding site is contributed by E200. D251 functions as the Proton acceptor in the catalytic mechanism. H330 contacts Zn(2+).

This sequence belongs to the glutaminyl-peptide cyclotransferase family.

It localises to the secreted. The catalysed reaction is N-terminal L-glutaminyl-[peptide] = N-terminal 5-oxo-L-prolyl-[peptide] + NH4(+). Its function is as follows. Responsible for the biosynthesis of pyroglutamyl peptides. Has a bias against acidic and tryptophan residues adjacent to the N-terminal glutaminyl residue and a lack of importance of chain length after the second residue. Also catalyzes N-terminal pyroglutamate formation. This Dictyostelium discoideum (Social amoeba) protein is Glutaminyl-peptide cyclotransferase (qpct).